Reading from the N-terminus, the 98-residue chain is Large ribosomal subunit protein uL23 (98 aa).

It belongs to the universal ribosomal protein uL23 family. In terms of assembly, part of the 50S ribosomal subunit. Contacts protein L29, and trigger factor when it is bound to the ribosome.

Functionally, one of the early assembly proteins it binds 23S rRNA. One of the proteins that surrounds the polypeptide exit tunnel on the outside of the ribosome. Forms the main docking site for trigger factor binding to the ribosome. The protein is Large ribosomal subunit protein uL23 of Legionella pneumophila (strain Paris).